The following is a 197-amino-acid chain: Peptide deformylase (197 aa).

2 residues coordinate Fe cation: cysteine 106 and histidine 148. The active site involves glutamate 149. Histidine 152 provides a ligand contact to Fe cation.

This sequence belongs to the polypeptide deformylase family. Requires Fe(2+) as cofactor.

It carries out the reaction N-terminal N-formyl-L-methionyl-[peptide] + H2O = N-terminal L-methionyl-[peptide] + formate. Its function is as follows. Removes the formyl group from the N-terminal Met of newly synthesized proteins. Requires at least a dipeptide for an efficient rate of reaction. N-terminal L-methionine is a prerequisite for activity but the enzyme has broad specificity at other positions. This Mycobacterium ulcerans (strain Agy99) protein is Peptide deformylase.